A 265-amino-acid polypeptide reads, in one-letter code: Small ribosomal subunit protein uS2 (265 aa).

This sequence belongs to the universal ribosomal protein uS2 family.

This is Small ribosomal subunit protein uS2 from Gluconobacter oxydans (strain 621H) (Gluconobacter suboxydans).